Consider the following 33-residue polypeptide: Natriuretic peptide NP2 (33 aa).

An intrachain disulfide couples cysteine 10 to cysteine 26.

Expressed by the venom gland.

It is found in the secreted. Functionally, snake venom natriuretic peptide that shows an increase in perfusion pressure, urinary flow and glomerular filtration rate. Reduces total and proximal tubular transport of sodium. In the aortic ring assay, causes a relaxant effect in endothelium-intact thoracic aortic rings precontracted with phenylephrine in the presence and absence of isatin, a natriuretic receptor antagonist. This Crotalus durissus cascavella (Northeastern Brazilian rattlesnake) protein is Natriuretic peptide NP2.